Consider the following 1096-residue polypeptide: Phospholipase D zeta 1 (1096 aa).

The residue at position 2 (A2) is an N-acetylalanine. Residues 50-204 (PKAVIVSVSR…REVCRFLEVS (155 aa)) form the PX domain. The disordered stretch occupies residues 131–152 (VQDEDADEVPLHQDESAKNRDV). Positions 139–151 (VPLHQDESAKNRD) are enriched in basic and acidic residues. The region spanning 234–342 (DDSNRCCGCC…WVASINDAAL (109 aa)) is the PH domain. The 28-residue stretch at 477–504 (YLWSHHEKLVIVDNQVCFIGGLDLCFGR) folds into the PLD phosphodiesterase 1 domain. Active-site residues include H482, K484, and D489. Over residues 607–632 (GRQEESDIESKKEEDSIRGIRRDDSF) the composition is skewed to basic and acidic residues. Residues 607 to 691 (GRQEESDIES…DGDTPMRGFV (85 aa)) form a disordered region. A PLD phosphodiesterase 2 domain is found at 892-919 (SQVYVHSKIMIVDDRAALIGSANINDRS). Catalysis depends on residues H897, K899, and D904.

Belongs to the phospholipase D family. PXPH-PLD subfamily. Does not require Ca(2+) or any other cation for activity. is required as a cofactor. As to expression, expressed in inflorescences, flowers, siliques, stems, leaves, and roots. Highest expression in roots.

The protein resides in the cytoplasmic vesicle. The enzyme catalyses a 1,2-diacyl-sn-glycero-3-phosphocholine + H2O = a 1,2-diacyl-sn-glycero-3-phosphate + choline + H(+). Calcium-independent and PIP2-dependent. In terms of biological role, hydrolyzes glycerol-phospholipids at the terminal phosphodiesteric bond to generate phosphatidic acids (PA). Phosphatidylcholine-selective. Regulates root-hair morphogenesis. Contributes to the supply of inorganic phosphorus for cell metabolism and diacylglycerol moieties for galactolipid synthesis in phosphorus-starved roots. Involved in root elongation during phosphate limitation. The chain is Phospholipase D zeta 1 from Arabidopsis thaliana (Mouse-ear cress).